The following is a 656-amino-acid chain: MSARAHPVDDDGEISPVERSSPRQANTPYVHKVEVPPKQNLFNEFMYTFKETFFHDDPLRHFKDQSKSKKLMLGIQSVFPVIEWGRKYNLKLFRGDLIAGLTIASLCIPQDIGYAKLASLDPKYGLYSSFVPPLVYACMGSSKDIAIGPVAVVSLLLGTLLRAEIDPNTNPNEYLRLAFTSTFFAGVTQAALGFFRLGFLIDFLSHAAVVGFMGGAAITIALQQLKGFLGINKFTKKTDIIAVLSSVISSAHHGWNWQTILISASFLIFLLISKFIGKRNKKLFWIPAIAPLVSVIISTFFVYITRADKKGVQIVKHLDKGLNPSSLRLIYFSGDYLLKGFRIGVVSGMVALTEAVAIGRTFAAMKDYQIDGNKEMVALGAMNVIGSMTSCYVSTGSFSRSAVNFMAGCQTAVSNIIMSIVVLLTLLFLTPLFKYTPNAILAAIIINAVIPLVDVNATILIFKIDKLDFVACMGAFFGVIFVSVEIGLLIAVGISFAKILLQVTRPRTAILGKIPGTSVYRNINQYPEATRIPGVLTIRVDSAIYFSNSNYVRERIQRWLTDEEEMVEAARLPRIQFLIIEMSPVTDIDTSGIHALEDLYKSLQKRDIQLVLANPGPPVINKLHVSHFADLIGHDKIFLTVAEAVDSCSPKLSDEV.

A disordered region spans residues 1-30 (MSARAHPVDDDGEISPVERSSPRQANTPYV). The Cytoplasmic segment spans residues 1–94 (MSARAHPVDD…GRKYNLKLFR (94 aa)). Residues 95–115 (GDLIAGLTIASLCIPQDIGYA) form a helical membrane-spanning segment. Residues 116–119 (KLAS) lie on the Extracellular side of the membrane. Residues 120-140 (LDPKYGLYSSFVPPLVYACMG) traverse the membrane as a helical segment. Topologically, residues 141 to 144 (SSKD) are cytoplasmic. A helical membrane pass occupies residues 145 to 165 (IAIGPVAVVSLLLGTLLRAEI). Topologically, residues 166 to 176 (DPNTNPNEYLR) are extracellular. 2 helical membrane passes run 177 to 197 (LAFTSTFFAGVTQAALGFFRL) and 198 to 218 (GFLIDFLSHAAVVGFMGGAAI). At 219–256 (TIALQQLKGFLGINKFTKKTDIIAVLSSVISSAHHGWN) the chain is on the extracellular side. A helical transmembrane segment spans residues 257-277 (WQTILISASFLIFLLISKFIG). Residues 278-283 (KRNKKL) are Cytoplasmic-facing. A helical transmembrane segment spans residues 284 to 304 (FWIPAIAPLVSVIISTFFVYI). The Extracellular portion of the chain corresponds to 305–342 (TRADKKGVQIVKHLDKGLNPSSLRLIYFSGDYLLKGFR). A helical membrane pass occupies residues 343 to 363 (IGVVSGMVALTEAVAIGRTFA). Over 364-375 (AMKDYQIDGNKE) the chain is Cytoplasmic. A helical membrane pass occupies residues 376 to 396 (MVALGAMNVIGSMTSCYVSTG). Residues 397–412 (SFSRSAVNFMAGCQTA) are Extracellular-facing. Residues 413–433 (VSNIIMSIVVLLTLLFLTPLF) form a helical membrane-spanning segment. The Cytoplasmic segment spans residues 434–441 (KYTPNAIL). The chain crosses the membrane as a helical span at residues 442–462 (AAIIINAVIPLVDVNATILIF). The Extracellular segment spans residues 463–473 (KIDKLDFVACM). A helical transmembrane segment spans residues 474-494 (GAFFGVIFVSVEIGLLIAVGI). Topologically, residues 495 to 656 (SFAKILLQVT…SCSPKLSDEV (162 aa)) are cytoplasmic. One can recognise an STAS domain in the interval 525 to 648 (QYPEATRIPG…LTVAEAVDSC (124 aa)).

The protein belongs to the SLC26A/SulP transporter (TC 2.A.53) family. Expressed in the phloem of cotyledons, hypocotyls and roots.

The protein localises to the membrane. High-affinity H(+)/sulfate cotransporter that mediates the loading of sulfate into the sieve tube. Plays a central role in the regulation of sulfate assimilation. This chain is Sulfate transporter 1.3 (SULTR1;3), found in Arabidopsis thaliana (Mouse-ear cress).